We begin with the raw amino-acid sequence, 263 residues long: Acyl-[acyl-carrier-protein]--UDP-N-acetylglucosamine O-acyltransferase (263 aa).

It belongs to the transferase hexapeptide repeat family. LpxA subfamily. As to quaternary structure, homotrimer.

It is found in the cytoplasm. The enzyme catalyses a (3R)-hydroxyacyl-[ACP] + UDP-N-acetyl-alpha-D-glucosamine = a UDP-3-O-[(3R)-3-hydroxyacyl]-N-acetyl-alpha-D-glucosamine + holo-[ACP]. The protein operates within glycolipid biosynthesis; lipid IV(A) biosynthesis; lipid IV(A) from (3R)-3-hydroxytetradecanoyl-[acyl-carrier-protein] and UDP-N-acetyl-alpha-D-glucosamine: step 1/6. Functionally, involved in the biosynthesis of lipid A, a phosphorylated glycolipid that anchors the lipopolysaccharide to the outer membrane of the cell. The protein is Acyl-[acyl-carrier-protein]--UDP-N-acetylglucosamine O-acyltransferase of Campylobacter jejuni subsp. jejuni serotype O:23/36 (strain 81-176).